We begin with the raw amino-acid sequence, 398 residues long: Homeobox protein knotted-1-like 1 (398 aa).

Disordered regions lie at residues 43–69 (TFHLQSSGGGGGGGSGDQCNFQSPGTH), 172–192 (EFEARQRSSGTSRETSKDPEL), and 234–277 (NNNA…PRAE). Over residues 49 to 58 (SGGGGGGGSG) the composition is skewed to gly residues. Residues 280–300 (ELKNHLLRKYSGYLSSLKQEL) form the ELK domain. Residues 301–364 (SKKKKKGKLP…NQRKRHWKPS (64 aa)) constitute a DNA-binding region (homeobox; TALE-type).

This sequence belongs to the TALE/KNOX homeobox family. As to expression, expressed only in the stems.

Its subcellular location is the nucleus. Its function is as follows. Probably binds to the DNA sequence 5'-TGAC-3'. The chain is Homeobox protein knotted-1-like 1 from Malus domestica (Apple).